The sequence spans 485 residues: Glutamyl-tRNA(Gln) amidotransferase subunit A (485 aa).

Residues Lys78 and Ser153 each act as charge relay system in the active site. Ser177 functions as the Acyl-ester intermediate in the catalytic mechanism.

This sequence belongs to the amidase family. GatA subfamily. As to quaternary structure, heterotrimer of A, B and C subunits.

It carries out the reaction L-glutamyl-tRNA(Gln) + L-glutamine + ATP + H2O = L-glutaminyl-tRNA(Gln) + L-glutamate + ADP + phosphate + H(+). Allows the formation of correctly charged Gln-tRNA(Gln) through the transamidation of misacylated Glu-tRNA(Gln) in organisms which lack glutaminyl-tRNA synthetase. The reaction takes place in the presence of glutamine and ATP through an activated gamma-phospho-Glu-tRNA(Gln). The protein is Glutamyl-tRNA(Gln) amidotransferase subunit A of Desulfotalea psychrophila (strain LSv54 / DSM 12343).